Consider the following 286-residue polypeptide: Polyamine aminopropyltransferase (286 aa).

One can recognise a PABS domain in the interval 6 to 239 (PVWIDEVFED…GWWSWLYASD (234 aa)). Gln-34 is an S-methyl-5'-thioadenosine binding site. His-65 and Asp-89 together coordinate spermidine. Residues Glu-109 and 140-141 (DG) contribute to the S-methyl-5'-thioadenosine site. Asp-159 acts as the Proton acceptor in catalysis. 159–162 (DGSD) is a binding site for spermidine. Pro-166 serves as a coordination point for S-methyl-5'-thioadenosine.

Belongs to the spermidine/spermine synthase family. Homodimer or homotetramer. Homodimer.

It is found in the cytoplasm. It carries out the reaction S-adenosyl 3-(methylsulfanyl)propylamine + putrescine = S-methyl-5'-thioadenosine + spermidine + H(+). It functions in the pathway amine and polyamine biosynthesis; spermidine biosynthesis; spermidine from putrescine: step 1/1. In terms of biological role, catalyzes the irreversible transfer of a propylamine group from the amino donor S-adenosylmethioninamine (decarboxy-AdoMet) to putrescine (1,4-diaminobutane) to yield spermidine. This chain is Polyamine aminopropyltransferase, found in Synechococcus elongatus (strain ATCC 33912 / PCC 7942 / FACHB-805) (Anacystis nidulans R2).